An 862-amino-acid chain; its full sequence is Eukaryotic translation initiation factor 3 subunit C (862 aa).

The segment at 1–81 (MSSRFFYGGG…EEEEKVTVVK (81 aa)) is disordered. The segment covering 17-54 (SSDEEELYSDREEEEKSEEEESSEEEDETSEEEESDEE) has biased composition (acidic residues). A compositionally biased stretch (basic and acidic residues) spans 55 to 65 (TGAKKFLKDVA). The segment covering 66-75 (SDSEEEEEEE) has biased composition (acidic residues). Positions 600–774 (FHMHINLELL…NAIVFRKGVE (175 aa)) constitute a PCI domain. Positions 813–862 (RDQGAGARGGRGSGRGGQARGGPRFPGGQQGRRPGGQQFGGGALGGAIKA) are disordered. Positions 818–862 (GARGGRGSGRGGQARGGPRFPGGQQGRRPGGQQFGGGALGGAIKA) are enriched in gly residues.

This sequence belongs to the eIF-3 subunit C family. Component of the eukaryotic translation initiation factor 3 (eIF-3) complex.

The protein resides in the cytoplasm. Component of the eukaryotic translation initiation factor 3 (eIF-3) complex, which is involved in protein synthesis of a specialized repertoire of mRNAs and, together with other initiation factors, stimulates binding of mRNA and methionyl-tRNAi to the 40S ribosome. The eIF-3 complex specifically targets and initiates translation of a subset of mRNAs involved in cell proliferation. In Neosartorya fischeri (strain ATCC 1020 / DSM 3700 / CBS 544.65 / FGSC A1164 / JCM 1740 / NRRL 181 / WB 181) (Aspergillus fischerianus), this protein is Eukaryotic translation initiation factor 3 subunit C (nip1).